The chain runs to 179 residues: MTLKNRYKESIRPKLLKELGLKNIHQVPKVVKVNVNRGLGEAASNSKALEASLNEMATITGQKALVTRAKKAIAGFKIREGMPIGCTVTLRGDRMYSFLERFINLALPRIRDFRGVNPKSFDGRGNYTVGVKEQLIFPEISFDKIDSIRGMDITIVTSARSDQEGKALLQELGMPFSKN.

The protein belongs to the universal ribosomal protein uL5 family. Part of the 50S ribosomal subunit; part of the 5S rRNA/L5/L18/L25 subcomplex. Contacts the 5S rRNA and the P site tRNA. Forms a bridge to the 30S subunit in the 70S ribosome.

Functionally, this is one of the proteins that bind and probably mediate the attachment of the 5S RNA into the large ribosomal subunit, where it forms part of the central protuberance. In the 70S ribosome it contacts protein S13 of the 30S subunit (bridge B1b), connecting the 2 subunits; this bridge is implicated in subunit movement. Contacts the P site tRNA; the 5S rRNA and some of its associated proteins might help stabilize positioning of ribosome-bound tRNAs. This Prochlorococcus marinus (strain MIT 9215) protein is Large ribosomal subunit protein uL5.